We begin with the raw amino-acid sequence, 577 residues long: Optineurin (577 aa).

Disordered regions lie at residues 1–32 (MSHQ…HPNL) and 101–143 (SHEN…KDQL). The stretch at 38 to 170 (EELLQQMKEL…VSELQLKLNS (133 aa)) forms a coiled coil. The segment at 58 to 209 (MKLNNQAMKG…GPTRTVSTGT (152 aa)) is interaction with Rab8. Positions 176–181 (DSFVEI) match the LIR motif. Ser-177 is modified (phosphoserine; by TBK1). Residues 186–197 (GEAEGSVKEIKH) show a composition bias toward basic and acidic residues. Disordered stretches follow at residues 186–209 (GEAE…STGT) and 261–297 (VSDF…TVGS). A Phosphoserine modification is found at Ser-198. Residues 239 to 508 (CLREGNQKVE…LLKENDAFED (270 aa)) adopt a coiled-coil conformation. 2 stretches are compositionally biased toward basic and acidic residues: residues 261–274 (VSDF…RSEI) and 281–292 (STEKENDEEKGP). The residue at position 342 (Ser-342) is a Phosphoserine. An interaction with HD region spans residues 411-577 (TRKESEKVDR…LQIHVMDCII (167 aa)). The segment at 412 to 520 (RKESEKVDRA…RQSLMEMQSR (109 aa)) is interaction with MYO6. A UBAN motif is present at residues 474–479 (DFHAER). At Ser-526 the chain carries Phosphoserine. The segment at 547–577 (QRNIPIHSCPKCGEVLPDIDTLQIHVMDCII) adopts a CCHC NOA-type zinc-finger fold. The Zn(2+) site is built by Cys-555, Cys-558, His-571, and Cys-575.

As to quaternary structure, self-associates. Interacts with HD. Interacts with GTF3A. Interacts with MYO6. Interacts (via UBAN) with ubiquitinated TFRC. Interacts with GTP-bound Rab8 (RAB8A and/or RAB8B). Interacts with TBC1D17. Interacts with TBK1. Interacts with TRAF3. Binds to linear ubiquitin chains. Interacts with LC3 family members MAP1LC3A, MAP1LC3B, GABARAP, GABARAPL1 and GABARAPL2; OPTN phosphorylation increases the association (at least with MAP1LC3B). Interacts with RAB12; the interaction may be indirect. Interacts with TBK1; this interaction leads to the Golgi localization of TBK1 and its subsequent activation. Interacts with palmitoyltransferase ZDHHC17/HIP14; the interaction does not lead to palmitoylation of OPTN. Interacts with CYLD. Interacts with TOM1; the interaction is indirect and is mediated by MYO6, which acts as a bridge between TOM1 and OPTN. Interacts with USP12; the interaction is independent of USP12 deubiquitinase activity and may be involved in regulation of autophagic flux. (Microbial infection) Interacts with E3 14.7 kDa protein of group C human adenovirus. Interacts with Bluetongue virus protein NS3. Phosphorylated by TBK1, leading to restrict bacterial proliferation in case of infection. Phosphorylation is induced by phorbol esters and decreases its half-time. In terms of tissue distribution, present in aqueous humor of the eye (at protein level). Expressed in the trabecular meshwork (at protein level). Expressed in nonpigmented ciliary epithelium (at protein level). Expressed at high levels in skeletal muscle, also detected in heart, brain, pancreas, kidney, placenta and liver. Expressed in dermal fibroblasts (at protein level).

The protein localises to the cytoplasm. It is found in the perinuclear region. It localises to the golgi apparatus. The protein resides in the trans-Golgi network. Its subcellular location is the cytoplasmic vesicle. The protein localises to the autophagosome. It is found in the recycling endosome. Its function is as follows. Plays an important role in the maintenance of the Golgi complex, in membrane trafficking, in exocytosis, through its interaction with myosin VI and Rab8. Links myosin VI to the Golgi complex and plays an important role in Golgi ribbon formation. Plays a role in the activation of innate immune response during viral infection. Mechanistically, recruits TBK1 at the Golgi apparatus, promoting its trans-phosphorylation after RLR or TLR3 stimulation. In turn, activated TBK1 phosphorylates its downstream partner IRF3 to produce IFN-beta/IFNB1. Plays a neuroprotective role in the eye and optic nerve. May act by regulating membrane trafficking and cellular morphogenesis via a complex that contains Rab8 and huntingtin (HD). Mediates the interaction of Rab8 with the probable GTPase-activating protein TBC1D17 during Rab8-mediated endocytic trafficking, such as that of transferrin receptor (TFRC/TfR); regulates Rab8 recruitment to tubules emanating from the endocytic recycling compartment. Autophagy receptor that interacts directly with both the cargo to become degraded and an autophagy modifier of the MAP1 LC3 family; targets ubiquitin-coated bacteria (xenophagy), such as cytoplasmic Salmonella enterica, and appears to function in the same pathway as SQSTM1 and CALCOCO2/NDP52. Functionally, (Microbial infection) May constitute a cellular target for various viruses, such as adenovirus E3 14.7 or Bluetongue virus, to inhibit innate immune response. During RNA virus infection, such as that of Sendai virus, negatively regulates the induction of IFNB1. This chain is Optineurin (OPTN), found in Homo sapiens (Human).